Reading from the N-terminus, the 200-residue chain is Crossover junction endodeoxyribonuclease RuvC (200 aa).

Residues aspartate 18, glutamate 78, and aspartate 151 contribute to the active site. Mg(2+) is bound by residues aspartate 18, glutamate 78, and aspartate 151.

The protein belongs to the RuvC family. As to quaternary structure, homodimer which binds Holliday junction (HJ) DNA. The HJ becomes 2-fold symmetrical on binding to RuvC with unstacked arms; it has a different conformation from HJ DNA in complex with RuvA. In the full resolvosome a probable DNA-RuvA(4)-RuvB(12)-RuvC(2) complex forms which resolves the HJ. Requires Mg(2+) as cofactor.

It localises to the cytoplasm. The catalysed reaction is Endonucleolytic cleavage at a junction such as a reciprocal single-stranded crossover between two homologous DNA duplexes (Holliday junction).. Functionally, the RuvA-RuvB-RuvC complex processes Holliday junction (HJ) DNA during genetic recombination and DNA repair. Endonuclease that resolves HJ intermediates. Cleaves cruciform DNA by making single-stranded nicks across the HJ at symmetrical positions within the homologous arms, yielding a 5'-phosphate and a 3'-hydroxyl group; requires a central core of homology in the junction. The consensus cleavage sequence is 5'-(A/T)TT(C/G)-3'. Cleavage occurs on the 3'-side of the TT dinucleotide at the point of strand exchange. HJ branch migration catalyzed by RuvA-RuvB allows RuvC to scan DNA until it finds its consensus sequence, where it cleaves and resolves the cruciform DNA. The protein is Crossover junction endodeoxyribonuclease RuvC of Cytophaga hutchinsonii (strain ATCC 33406 / DSM 1761 / CIP 103989 / NBRC 15051 / NCIMB 9469 / D465).